A 656-amino-acid chain; its full sequence is MFSFRNQQVLTFVSSLSTFVTIILNHLKKWWSDVTLRTRLMAMTTLMVSLLMSSLTFWTLTSIQQETRLIDNRFGKDLSLLLAVNITPILEGDNYLQLQQFIEHFYLSTSSIRYILVFNADGQIYYSIPFSSETAINFFSLSEYNCFRNENHYFSNTPIVNTNNRLQGEVIDIIIPLSKEKKLLGILNIGINSNPTLTTSSQLTRDVSVAVFISIWLMVILGAAFNAFTITRPIRELLTGVKNIASGDFYQRIDLPFGGELGALIFNFNEMAERLEKYEQQNVEKLTSEKAKLETLVSTIADGAILLDKDLRVILVNRTAIENFGWEGKNIAGSIIVDYLPEDINQQLFPILNDIIRKNFLEQSICETQEICIKLQKNYKKTFRVLLTTVLDHKYSILKGIAMTIQDRTQEVELNEIKNQFISNVSHELRTPLFNIRSFLETLYEYHDSLDDSQKLEFLAIANKETGRLTRLVNDVLDLSRLESDQEYTLQPTDLVSAVEQTIRTYQLSAKDKRIDLHIDIEQNLQCVLGNYNLILQILANLVVNSLKFTHPNGIIILRAYTVDDLKTETEVQHFNSQKVRVEICDNGIGISRKNQERIFARFLRIENYVHTLEGTGLGLSIVKNIIQKHNSEIHLYSELKNGSCFFFDLMIAKDE.

3 consecutive transmembrane segments (helical) span residues 7–27, 40–60, and 210–230; these read QQVL…LNHL, LMAM…FWTL, and AVFI…AFTI. An HAMP domain is found at 231-280; the sequence is TRPIRELLTGVKNIASGDFYQRIDLPFGGELGALIFNFNEMAERLEKYEQ. The 71-residue stretch at 289-359 folds into the PAS domain; that stretch reads EKAKLETLVS…PILNDIIRKN (71 aa). Positions 424–654 constitute a Histidine kinase domain; that stretch reads NVSHELRTPL…CFFFDLMIAK (231 aa). Position 427 is a phosphohistidine; by autocatalysis (His-427).

The protein resides in the plastid. It localises to the chloroplast membrane. It carries out the reaction ATP + protein L-histidine = ADP + protein N-phospho-L-histidine.. This is an uncharacterized protein from Porphyra purpurea (Red seaweed).